A 329-amino-acid polypeptide reads, in one-letter code: Mas-related G-protein coupled receptor member X2 (329 aa).

At 1–33 (MDPTTPAWGTESTTMDGNDQSLPLLCDKEALIP) the chain is on the extracellular side. The helical transmembrane segment at 34–54 (VFLILFIALVGLVGNGFVLWL) threads the bilayer. Topologically, residues 55–63 (LGFRMSRNA) are cytoplasmic. A helical transmembrane segment spans residues 64–84 (FSVYVLSLAGADFLFLCFQII). Residues 85–96 (NCLVYLRDFFCS) are Extracellular-facing. Residues 97 to 117 (ISINFPSXFTTVMTCAYLAGL) traverse the membrane as a helical segment. The Cytoplasmic segment spans residues 118 to 144 (SMLSTISTERCLSVLWPIWYRCRRPRH). A helical membrane pass occupies residues 145 to 165 (LSAVVCVLLWALSLLLSILEG). The Extracellular portion of the chain corresponds to 166–184 (KFCGFLFSDGDFGWCQIFD). The helical transmembrane segment at 185–205 (FITAAWLIFLFVVLCASSLAL) threads the bilayer. The Cytoplasmic portion of the chain corresponds to 206-228 (LVRILCGSRGLPLTRLYLTILLT). The chain crosses the membrane as a helical span at residues 229–249 (VLVFLLCGLPFGIQWFLILGF). The Extracellular portion of the chain corresponds to 250 to 263 (WNSDVLLCHIHLVS). Residues 264–284 (VVLSSLNSSANPIIYFFVGSF) traverse the membrane as a helical segment. At 285–329 (RKQWRLQQPILKLAFQRALQDTAEVDHSEGCFPQGTSEMSRSSLV) the chain is on the cytoplasmic side.

This sequence belongs to the G-protein coupled receptor 1 family. Mas subfamily.

It is found in the cell membrane. In terms of biological role, mast cell-specific receptor for basic secretagogues, i.e. cationic amphiphilic drugs, as well as endo- or exogenous peptides, consisting of a basic head group and a hydrophobic core. Recognizes and binds small molecules containing a cyclized tetrahydroisoquinoline (THIQ), such as non-steroidal neuromuscular blocking drugs (NMBDs), including tubocurarine and atracurium. In response to these compounds, mediates pseudo-allergic reactions characterized by histamine release, inflammation and airway contraction. The polypeptide is Mas-related G-protein coupled receptor member X2 (MRGPRX2) (Hoolock hoolock (Western hoolock gibbon)).